Consider the following 311-residue polypeptide: MQPFDQPVIALRKKILELHDMAETQGLDFKEELNLLEERLRRLELDIYGNMKAWNRVQLARHPERPTTLDYVRLICDDFIELHGDRHGYDDAAIVGGIAMLNGQAVTVIGHQRGKDTKENIRRNFGMPHPEGYRKALRLMQQAVKFNRPIITFIDTKGAYPGRAAEERGQSEAIAKNLFEMAGMPVPIISIVIGEGGSGGALGIGVCDQLLMLENSTYSVISPEGAAALLWKDASLAEKAAESMQITAPDLLRLGIADGIISEVIGGAHLDVSLQADKLKSVLEQKLAQLTRLTPEQLIEKRTEKYHQIGT.

Residues 32–289 (ELNLLEERLR…KSVLEQKLAQ (258 aa)) form the CoA carboxyltransferase C-terminal domain.

The protein belongs to the AccA family. Acetyl-CoA carboxylase is a heterohexamer composed of biotin carboxyl carrier protein (AccB), biotin carboxylase (AccC) and two subunits each of ACCase subunit alpha (AccA) and ACCase subunit beta (AccD).

Its subcellular location is the cytoplasm. The enzyme catalyses N(6)-carboxybiotinyl-L-lysyl-[protein] + acetyl-CoA = N(6)-biotinyl-L-lysyl-[protein] + malonyl-CoA. It participates in lipid metabolism; malonyl-CoA biosynthesis; malonyl-CoA from acetyl-CoA: step 1/1. Component of the acetyl coenzyme A carboxylase (ACC) complex. First, biotin carboxylase catalyzes the carboxylation of biotin on its carrier protein (BCCP) and then the CO(2) group is transferred by the carboxyltransferase to acetyl-CoA to form malonyl-CoA. In Exiguobacterium sibiricum (strain DSM 17290 / CCUG 55495 / CIP 109462 / JCM 13490 / 255-15), this protein is Acetyl-coenzyme A carboxylase carboxyl transferase subunit alpha.